Consider the following 309-residue polypeptide: MSIRIIPQDELGSSEKRTADMIPPLLFPRLKNLYNRRAERLRELAENNPLGDYLRFAALIAHAQEVVLYDHPLEMDLTARIKEASAQGKPPLDIHVLPRDKHWQKLLMALIAELKPEMSGPALAVIENLEKASTQELEDMASALFASDFSSVSSDKAPFIWAALSLYWAQMANLIPGKARAEYGEQRQYCPVCGSMPVSSMVQIGTTQGLRYLHCNLCETEWHVVRVKCSNCEQSGKLHYWSLDDEQAAIKAESCDDCDTYLKILYQEKDPKIEAVADDLASLVLDARMEQEGYARSSINPFLFPGEGE.

The protein belongs to the FdhE family.

The protein localises to the cytoplasm. Necessary for formate dehydrogenase activity. This chain is Protein FdhE, found in Escherichia coli (strain K12 / MC4100 / BW2952).